Consider the following 539-residue polypeptide: O-phosphoserine--tRNA(Cys) ligase (539 aa).

Residues 188 to 190 (HMT), 233 to 235 (SAS), 275 to 276 (YY), and asparagine 319 contribute to the substrate site.

It belongs to the class-II aminoacyl-tRNA synthetase family. O-phosphoseryl-tRNA(Cys) synthetase subfamily. As to quaternary structure, homotetramer. Interacts with SepCysS.

It carries out the reaction tRNA(Cys) + O-phospho-L-serine + ATP = O-phospho-L-seryl-tRNA(Cys) + AMP + diphosphate. Catalyzes the attachment of O-phosphoserine (Sep) to tRNA(Cys). The protein is O-phosphoserine--tRNA(Cys) ligase (sepS) of Methanocaldococcus jannaschii (strain ATCC 43067 / DSM 2661 / JAL-1 / JCM 10045 / NBRC 100440) (Methanococcus jannaschii).